Here is a 363-residue protein sequence, read N- to C-terminus: Photosystem II protein D1 1 (363 aa).

A run of 3 helical transmembrane segments spans residues 32–49 (YVGW…VSAI), 121–136 (HFLI…QWEL), and 145–159 (WIAM…AATA). His-121 provides a ligand contact to chlorophyll a. Tyr-129 contributes to the pheophytin a binding site. Positions 173 and 192 each coordinate [CaMn4O5] cluster. The chain crosses the membrane as a helical span at residues 200–221 (FHMLGVVGVFGGAFLSAMHGSL). His-201 is a chlorophyll a binding site. A quinone contacts are provided by residues His-218 and 268–269 (AF). His-218 is a Fe cation binding site. His-276 lines the Fe cation pocket. A helical membrane pass occupies residues 278 to 292 (LLAVLPTIGIWFAAL). [CaMn4O5] cluster-binding residues include His-336 and Ala-348. A propeptide spanning residues 349–363 (STESKEIPTIPIMTS) is cleaved from the precursor.

Belongs to the reaction center PufL/M/PsbA/D family. PSII is composed of 1 copy each of membrane proteins PsbA, PsbB, PsbC, PsbD, PsbE, PsbF, PsbH, PsbI, PsbJ, PsbK, PsbL, PsbM, PsbT, PsbX, PsbY, PsbZ, Psb30/Ycf12, peripheral proteins PsbO, CyanoQ (PsbQ), PsbU, PsbV and a large number of cofactors. It forms dimeric complexes. Requires The D1/D2 heterodimer binds P680, chlorophylls that are the primary electron donor of PSII, and subsequent electron acceptors. It shares a non-heme iron and each subunit binds pheophytin, quinone, additional chlorophylls, carotenoids and lipids. D1 provides most of the ligands for the Mn4-Ca-O5 cluster of the oxygen-evolving complex (OEC). There is also a Cl(-1) ion associated with D1 and D2, which is required for oxygen evolution. The PSII complex binds additional chlorophylls, carotenoids and specific lipids. as cofactor. Tyr-164 forms a radical intermediate that is referred to as redox-active TyrZ, YZ or Y-Z. In terms of processing, C-terminally processed by CtpA; processing is essential to allow assembly of the oxygen-evolving complex and thus photosynthetic growth.

It localises to the cellular thylakoid membrane. It carries out the reaction 2 a plastoquinone + 4 hnu + 2 H2O = 2 a plastoquinol + O2. Its function is as follows. Photosystem II (PSII) is a light-driven water:plastoquinone oxidoreductase that uses light energy to abstract electrons from H(2)O, generating O(2) and a proton gradient subsequently used for ATP formation. It consists of a core antenna complex that captures photons, and an electron transfer chain that converts photonic excitation into a charge separation. The D1/D2 (PsbA/PsbD) reaction center heterodimer binds P680, the primary electron donor of PSII as well as several subsequent electron acceptors. In Acaryochloris marina (strain MBIC 11017), this protein is Photosystem II protein D1 1.